We begin with the raw amino-acid sequence, 208 residues long: Small ribosomal subunit protein uS4 (208 aa).

The region spanning 98 to 158 (RRLDNVVYRL…EKSRKIACIN (61 aa)) is the S4 RNA-binding domain.

This sequence belongs to the universal ribosomal protein uS4 family. As to quaternary structure, part of the 30S ribosomal subunit. Contacts protein S5. The interaction surface between S4 and S5 is involved in control of translational fidelity.

Its function is as follows. One of the primary rRNA binding proteins, it binds directly to 16S rRNA where it nucleates assembly of the body of the 30S subunit. Functionally, with S5 and S12 plays an important role in translational accuracy. The chain is Small ribosomal subunit protein uS4 from Geobacter sulfurreducens (strain ATCC 51573 / DSM 12127 / PCA).